The primary structure comprises 138 residues: Large ribosomal subunit protein uL16 (138 aa).

The span at methionine 1 to glutamine 13 shows a compositional bias: basic residues. The disordered stretch occupies residues methionine 1–threonine 22.

The protein belongs to the universal ribosomal protein uL16 family. Part of the 50S ribosomal subunit.

Functionally, binds 23S rRNA and is also seen to make contacts with the A and possibly P site tRNAs. The chain is Large ribosomal subunit protein uL16 from Methylibium petroleiphilum (strain ATCC BAA-1232 / LMG 22953 / PM1).